Reading from the N-terminus, the 301-residue chain is Troponin T, cardiac muscle (301 aa).

The span at 1-72 (MSDAEEVVEE…EAKDAEEGPV (72 aa)) shows a compositional bias: acidic residues. Disordered regions lie at residues 1–97 (MSDA…DGER) and 125–224 (NRKK…KKKI). Ser-2 carries the post-translational modification N-acetylserine. Ser-2 bears the Phosphoserine; by CK2 mark. Composition is skewed to basic and acidic residues over residues 125-186 (NRKK…DEAR) and 206-224 (QTER…KKKI). Thr-207 is modified (phosphothreonine; by PKC/PRKCA). Residue Ser-211 is modified to Phosphoserine; by PKC/PRKCA. The residue at position 216 (Thr-216) is a Phosphothreonine; by PKC/PRKCA and RAF1. Thr-297 bears the Phosphothreonine; by PKC/PRKCA mark.

It belongs to the troponin T family. Post-translationally, phosphorylation at Thr-216 by PRKCA induces significant reduction in myofilament calcium sensitivity and actomyosin ATPase activity.

Its function is as follows. Troponin T is the tropomyosin-binding subunit of troponin, the thin filament regulatory complex which confers calcium-sensitivity to striated muscle actomyosin ATPase activity. The chain is Troponin T, cardiac muscle (Tnnt2) from Mus musculus (Mouse).